A 619-amino-acid polypeptide reads, in one-letter code: MANKPKPSEHLRDLIRSGQRTSPEADLQLKQQQQPRQTQPSRPSSSLTQSYEPPGTTRVPVSPVISTSESSGSSRSPASSGSSRSSGSSGSSRLSGSSRASVNTIMNLSNIEFNDTPSVTDDSYYTNVMTESPIRKAASQRLPTGVMDSIRGSLENINVSHNLTPTTPLSKPNTLMYKKGAPAPPRLTPILPSYKTNLKPVVQTPKIQRKTSQIEEESDDDSSSQNNSSDQEEEEEEEEEEEEEEEEEEEEEEEEEEEEEEEEEEEEEEEEEEEEEEEEEEEEEEEVREAPKRSGGKPLPSPSLSSIFSNYDESSSVASSESSKQSRVKVSKKPSPLIKKKPAPIKKVTTPTRSKQQQQSPLPPTRRSPLPSEAKKPAASKKVSKNVLSSSSSSPSSSSSSSSSLTPTKSRRETIVTTPTKTPPSTRSKSITPLSTPTRTPPSTRSKTSSTPSSTPSSLSISTPSSTSISSPVSSRTSTSILTPPSTPTSTHSSTSASITTPTTPRIRVQRTTTTPTTPTTPRKKRRRRLVASVIRRLRNSVDFMIPRLPLSRLVREIMCLFDDGLRITPGALLAIQTTTEAYLTRLMEDSGLLASHAGRKTIRSVDMYAWKRARHFLF.

Over residues 1-15 (MANKPKPSEHLRDLI) the composition is skewed to basic and acidic residues. Disordered stretches follow at residues 1–99 (MANK…GSSR) and 190–526 (ILPS…RKKR). 2 stretches are compositionally biased toward low complexity: residues 28–50 (QLKQQQQPRQTQPSRPSSSLTQS) and 66–99 (STSESSGSSRSPASSGSSRSSGSSGSSRLSGSSR). Positions 230 to 287 (DQEEEEEEEEEEEEEEEEEEEEEEEEEEEEEEEEEEEEEEEEEEEEEEEEEEEEEEEV) are enriched in acidic residues. Composition is skewed to low complexity over residues 296–306 (GKPLPSPSLSS) and 314–325 (SSSVASSESSKQ). Positions 326–344 (SRVKVSKKPSPLIKKKPAP) are enriched in basic residues. 3 stretches are compositionally biased toward low complexity: residues 345–360 (IKKVTTPTRSKQQQQS), 385–408 (KNVLSSSSSSPSSSSSSSSSLTPT), and 415–521 (IVTT…TPTT).

The protein belongs to the histone H3 family.

This is Histone H3.v1 (H3v1) from Dictyostelium discoideum (Social amoeba).